A 354-amino-acid chain; its full sequence is Guanine nucleotide-binding protein subunit alpha-14 (354 aa).

Residues 33–354 (RELKLLLLGT…QLNLREFNLV (322 aa)) enclose the G-alpha domain. Positions 36–49 (KLLLLGTGESGKST) are G1 motif. GTP-binding positions include 41–48 (GTGESGKS), 175–181 (LRVRVPT), 200–204 (DVGGQ), 269–272 (NKKD), and alanine 326. 2 residues coordinate Mg(2+): serine 48 and threonine 181. The G2 motif stretch occupies residues 173–181 (DVLRVRVPT). The interval 196 to 205 (FRMVDVGGQR) is G3 motif. The G4 motif stretch occupies residues 265-272 (ILFLNKKD). A G5 motif region spans residues 324 to 329 (TCATDT).

The protein belongs to the G-alpha family. G(q) subfamily. As to quaternary structure, g proteins are composed of 3 units; alpha, beta and gamma. The alpha chain contains the guanine nucleotide binding site.

Functionally, guanine nucleotide-binding proteins (G proteins) are involved as modulators or transducers in various transmembrane signaling systems. Acts as an activator of phospholipase C. Mediates responses to trypsin. The protein is Guanine nucleotide-binding protein subunit alpha-14 (gna14) of Xenopus laevis (African clawed frog).